The sequence spans 168 residues: Large ribosomal subunit protein uL10 (168 aa).

It belongs to the universal ribosomal protein uL10 family. As to quaternary structure, part of the ribosomal stalk of the 50S ribosomal subunit. The N-terminus interacts with L11 and the large rRNA to form the base of the stalk. The C-terminus forms an elongated spine to which L12 dimers bind in a sequential fashion forming a multimeric L10(L12)X complex.

Its function is as follows. Forms part of the ribosomal stalk, playing a central role in the interaction of the ribosome with GTP-bound translation factors. The protein is Large ribosomal subunit protein uL10 of Acinetobacter baylyi (strain ATCC 33305 / BD413 / ADP1).